A 247-amino-acid polypeptide reads, in one-letter code: DNA polymerase sliding clamp 1 (247 aa).

This sequence belongs to the PCNA family. Heterotrimer. The subunits circularize to form a toroid; DNA passes through its center. Replication factor C (RFC) is required to load the toroid on the DNA.

Functionally, sliding clamp subunit that acts as a moving platform for DNA processing. Responsible for tethering the catalytic subunit of DNA polymerase and other proteins to DNA during high-speed replication. This is DNA polymerase sliding clamp 1 from Aeropyrum pernix (strain ATCC 700893 / DSM 11879 / JCM 9820 / NBRC 100138 / K1).